We begin with the raw amino-acid sequence, 360 residues long: Lipid-A-disaccharide synthase (360 aa).

Belongs to the LpxB family.

The enzyme catalyses a lipid X + a UDP-2-N,3-O-bis[(3R)-3-hydroxyacyl]-alpha-D-glucosamine = a lipid A disaccharide + UDP + H(+). It functions in the pathway bacterial outer membrane biogenesis; LPS lipid A biosynthesis. Condensation of UDP-2,3-diacylglucosamine and 2,3-diacylglucosamine-1-phosphate to form lipid A disaccharide, a precursor of lipid A, a phosphorylated glycolipid that anchors the lipopolysaccharide to the outer membrane of the cell. This chain is Lipid-A-disaccharide synthase, found in Helicobacter pylori (strain G27).